The following is a 178-amino-acid chain: Caveolin-1 (178 aa).

Position 2 is an N-acetylserine (Ser2). Ser2 is modified (phosphoserine). The required for homooligomerization stretch occupies residues 2-94 (SGGKYIDSEG…WKASFTTFTV (93 aa)). The Cytoplasmic segment spans residues 2-104 (SGGKYIDSEG…TKYWFYRLLS (103 aa)). N6-acetyllysine; alternate is present on Lys5. Lys5 participates in a covalent cross-link: Glycyl lysine isopeptide (Lys-Gly) (interchain with G-Cter in ubiquitin); alternate. Tyr6 carries the post-translational modification Phosphotyrosine. Ser9 carries the phosphoserine modification. Position 14 is a phosphotyrosine; by ABL1 (Tyr14). Tyr25 carries the phosphotyrosine modification. Glycyl lysine isopeptide (Lys-Gly) (interchain with G-Cter in ubiquitin) cross-links involve residues Lys26, Lys30, Lys39, Lys47, and Lys57. The interaction with CAVIN3 stretch occupies residues 82-94 (DGIWKASFTTFTV). Positions 105–125 (ALFGIPMALIWGIYFAILSFL) form an intramembrane region, helical. Over 126–178 (HIWAVVPCIRSYLIEIQCISRIYSICIHTFCDPLFEAIGKIFSNVRIALQKEI) the chain is Cytoplasmic. An interacts with SPRY1, SPRY2, SPRY3 and SPRY4 region spans residues 131–142 (VPCIRSYLIEIQ). S-palmitoyl cysteine attachment occurs at residues Cys133, Cys143, and Cys156. The segment at 149–160 (SICIHTFCDPLF) is interacts with SPRY1, SPRY2, and SPRY4. The interacts with SPRY1, SPRY2, SPRY3 and SPRY4 stretch occupies residues 167-178 (FSNVRIALQKEI).

This sequence belongs to the caveolin family. Homooligomer. Interacts with GLIPR2. Interacts with NOSTRIN. Interacts with SNAP25 and STX1A. Interacts (via the N-terminus) with DPP4; the interaction is direct. Interacts with CTNNB1, CDH1 and JUP. Interacts with PACSIN2; this interaction induces membrane tubulation. Interacts with SLC7A9. Interacts with BMX and BTK. Interacts with TGFBR1. Interacts with CAVIN3 (via leucine-zipper domain) in a cholesterol-sensitive manner. Interacts with CAVIN1. Interacts with EHD2 in a cholesterol-dependent manner. Forms a ternary complex with UBXN6 and VCP; mediates CAV1 targeting to lysosomes for degradation. Interacts with ABCG1; this interaction regulates ABCG1-mediated cholesterol efflux. Interacts with NEU3; this interaction enhances NEU3 sialidase activity within caveola. Interacts (via C-terminus) with SPRY1, SPRY2 (via C-terminus), SPRY3, and SPRY4. Interacts with IGFBP5; this interaction allows trafficking of IGFBP5 from the plasma membrane to the nucleus. Phosphorylated at Tyr-14 by ABL1 in response to oxidative stress. In terms of processing, ubiquitinated. Undergo monoubiquitination and multi- and/or polyubiquitination. Monoubiquitination of N-terminal lysines promotes integration in a ternary complex with UBXN6 and VCP which promotes oligomeric CAV1 targeting to lysosomes for degradation. Ubiquitinated by ZNRF1; leading to degradation and modulation of the TLR4-mediated immune response.

It is found in the golgi apparatus membrane. The protein resides in the cell membrane. Its subcellular location is the membrane. It localises to the caveola. The protein localises to the membrane raft. May act as a scaffolding protein within caveolar membranes. Forms a stable heterooligomeric complex with CAV2 that targets to lipid rafts and drives caveolae formation. Mediates the recruitment of CAVIN proteins (CAVIN1/2/3/4) to the caveolae. Interacts directly with G-protein alpha subunits and can functionally regulate their activity. Involved in the costimulatory signal essential for T-cell receptor (TCR)-mediated T-cell activation. Its binding to DPP4 induces T-cell proliferation and NF-kappa-B activation in a T-cell receptor/CD3-dependent manner. Recruits CTNNB1 to caveolar membranes and may regulate CTNNB1-mediated signaling through the Wnt pathway. Negatively regulates TGFB1-mediated activation of SMAD2/3 by mediating the internalization of TGFBR1 from membrane rafts leading to its subsequent degradation. Binds 20(S)-hydroxycholesterol (20(S)-OHC). This chain is Caveolin-1 (CAV1), found in Didelphis virginiana (North American opossum).